A 306-amino-acid chain; its full sequence is Beta-lactamase (306 aa).

The segment at residues 1 to 34 (MDRTTARPNRRAVLATGVGAALAATAAAAGPAHA) is a signal peptide (tat-type signal). Serine 82 functions as the Acyl-ester intermediate in the catalytic mechanism. 250 to 252 (KTG) contributes to the substrate binding site.

It belongs to the class-A beta-lactamase family. In terms of processing, predicted to be exported by the Tat system. The position of the signal peptide cleavage has not been experimentally proven.

The catalysed reaction is a beta-lactam + H2O = a substituted beta-amino acid. The polypeptide is Beta-lactamase (blaF) (Streptomyces fradiae (Streptomyces roseoflavus)).